The following is a 152-amino-acid chain: UPF0178 protein YaiI (152 aa).

It belongs to the UPF0178 family.

This chain is UPF0178 protein YaiI, found in Shigella flexneri.